Consider the following 521-residue polypeptide: Hyccin (521 aa).

Thr-306 is subject to Phosphothreonine. Ser-321 bears the Phosphoserine mark. Over residues 355–373 the composition is skewed to low complexity; the sequence is AASSTSQSGLSNSSHNCSN. Positions 355 to 413 are disordered; the sequence is AASSTSQSGLSNSSHNCSNKTSVGKNQRRSGGSKAGAKERETAGESCRDHFARKQTQRA. Residues 390–406 are compositionally biased toward basic and acidic residues; the sequence is GAKERETAGESCRDHFA. Phosphoserine is present on residues Ser-415, Ser-422, Ser-433, Ser-453, and Ser-465.

The protein belongs to the Hyccin family. In terms of assembly, component of a phosphatidylinositol 4-kinase (PI4K) complex, composed of PI4KA, EFR3 (EFR3A or EFR3B), TTC7 (TTC7A or TTC7B) and HYCC (HYCC1 or HYCC2). Interacts with TTC7 (TTC7A or TTC7B), interaction is direct. In terms of tissue distribution, predominantly expressed in the central nervous system, where it is found in neurons but not in myelinating cells. Lower abundance is observed in peripheral neurons, where it is detectable only at early postnatal ages. Expressed in both oligodendrocytes and neurons.

Its subcellular location is the cytoplasm. It is found in the cytosol. The protein resides in the cell membrane. Component of a complex required to localize phosphatidylinositol 4-kinase (PI4K) to the plasma membrane. The complex acts as a regulator of phosphatidylinositol 4-phosphate (PtdIns(4)P) synthesis. HYCC1 plays a key role in oligodendrocytes formation, a cell type with expanded plasma membrane that requires generation of PtdIns(4)P. Its role in oligodendrocytes formation probably explains its importance in myelination of the central and peripheral nervous system. May also have a role in the beta-catenin/Lef signaling pathway. The polypeptide is Hyccin (Hycc1) (Mus musculus (Mouse)).